The sequence spans 191 residues: Dirigent protein 3 (191 aa).

An N-terminal signal peptide occupies residues 1–21; that stretch reads MSKLILILTAQILLLTATALA. N-linked (GlcNAc...) asparagine glycosylation is found at N96 and N131.

The protein belongs to the plant dirigent protein family. Homodimer.

It is found in the secreted. It localises to the extracellular space. The protein resides in the apoplast. In terms of biological role, dirigent proteins impart stereoselectivity on the phenoxy radical-coupling reaction, yielding optically active lignans from two molecules of coniferyl alcohol in the biosynthesis of lignans, flavonolignans, and alkaloids and thus plays a central role in plant secondary metabolism. The protein is Dirigent protein 3 (DIR3) of Arabidopsis thaliana (Mouse-ear cress).